The sequence spans 1254 residues: DNA-directed RNA polymerase subunit beta (1254 aa).

Belongs to the RNA polymerase beta chain family. In terms of assembly, the RNAP catalytic core consists of 2 alpha, 1 beta, 1 beta' and 1 omega subunit. When a sigma factor is associated with the core the holoenzyme is formed, which can initiate transcription.

The enzyme catalyses RNA(n) + a ribonucleoside 5'-triphosphate = RNA(n+1) + diphosphate. Functionally, DNA-dependent RNA polymerase catalyzes the transcription of DNA into RNA using the four ribonucleoside triphosphates as substrates. The chain is DNA-directed RNA polymerase subunit beta from Protochlamydia amoebophila (strain UWE25).